The following is a 364-amino-acid chain: Triacylglycerol lipase (364 aa).

Positions 1–44 are cleaved as a signal peptide; the sequence is MARTMRSRVVAGAVACAMSIAPFAGTTAVMTLATTHAAMAATAP. Residues 54–333 enclose the AB hydrolase-1 domain; it reads PIILVHGLSG…TSYKWNHLDE (280 aa). L61 lines the substrate pocket. The Nucleophile role is filled by S131. Residue Q132 coordinates substrate. The cysteines at positions 234 and 314 are disulfide-linked. D286 serves as a coordination point for Ca(2+). Active-site charge relay system residues include D308 and H330. Positions 332, 336, and 340 each coordinate Ca(2+).

Belongs to the AB hydrolase superfamily. Pseudomonas lipase family. Monomer. It depends on Ca(2+) as a cofactor.

The protein resides in the secreted. It catalyses the reaction a triacylglycerol + H2O = a diacylglycerol + a fatty acid + H(+). In terms of biological role, catalyzes the hydrolysis of triacylglycerol. This chain is Triacylglycerol lipase, found in Pseudomonas sp. (strain KWI-56).